Reading from the N-terminus, the 266-residue chain is Ribosomal RNA small subunit methyltransferase A (266 aa).

6 residues coordinate S-adenosyl-L-methionine: asparagine 12, leucine 14, glycine 39, glutamate 61, aspartate 87, and asparagine 107.

It belongs to the class I-like SAM-binding methyltransferase superfamily. rRNA adenine N(6)-methyltransferase family. RsmA subfamily.

It localises to the cytoplasm. It carries out the reaction adenosine(1518)/adenosine(1519) in 16S rRNA + 4 S-adenosyl-L-methionine = N(6)-dimethyladenosine(1518)/N(6)-dimethyladenosine(1519) in 16S rRNA + 4 S-adenosyl-L-homocysteine + 4 H(+). In terms of biological role, specifically dimethylates two adjacent adenosines (A1518 and A1519) in the loop of a conserved hairpin near the 3'-end of 16S rRNA in the 30S particle. May play a critical role in biogenesis of 30S subunits. The polypeptide is Ribosomal RNA small subunit methyltransferase A (Nitratidesulfovibrio vulgaris (strain DP4) (Desulfovibrio vulgaris)).